The sequence spans 292 residues: Homoserine kinase (292 aa).

Residue 81 to 91 (RPKSGLGSSGA) coordinates ATP.

Belongs to the GHMP kinase family. Homoserine kinase subfamily.

Its subcellular location is the cytoplasm. It catalyses the reaction L-homoserine + ATP = O-phospho-L-homoserine + ADP + H(+). It functions in the pathway amino-acid biosynthesis; L-threonine biosynthesis; L-threonine from L-aspartate: step 4/5. In terms of biological role, catalyzes the ATP-dependent phosphorylation of L-homoserine to L-homoserine phosphate. In Pyrococcus furiosus (strain ATCC 43587 / DSM 3638 / JCM 8422 / Vc1), this protein is Homoserine kinase.